Reading from the N-terminus, the 197-residue chain is Scoloptoxin SSD20 (197 aa).

A signal peptide spans 1-6; it reads PPMTTE.

Expressed by the venom gland.

It is found in the secreted. Functionally, may act as a voltage-gated potassium channel inhibitor. Is highly similar to the subunit beta of SSD14 which, when complexed with subunit alpha, induces platelet aggregation and hemolysis. The polypeptide is Scoloptoxin SSD20 (Scolopendra dehaani (Thai centipede)).